Here is a 145-residue protein sequence, read N- to C-terminus: Transcription antitermination protein NusB (145 aa).

It belongs to the NusB family.

Functionally, involved in transcription antitermination. Required for transcription of ribosomal RNA (rRNA) genes. Binds specifically to the boxA antiterminator sequence of the ribosomal RNA (rrn) operons. The sequence is that of Transcription antitermination protein NusB from Geotalea daltonii (strain DSM 22248 / JCM 15807 / FRC-32) (Geobacter daltonii).